Reading from the N-terminus, the 556-residue chain is MNSLEQVKGLIKEEIQAAVLKAELATEEQIPNVVLESPKDKTNGDFSTNMAMQLARVAKKAPRMIAEELVANFDKAKASIEKIEIAGPGFINFYMDNSYLTDLIPTIVNAGEAYGETNTGKGEKVQVEFVSANPTGDLHLGHARGAAVGDTLCNLLAKAGYDVSREYYINDAGNQIHNLALSVEARYMQALGLEKEMPEDGYHGADIIGIGKSLAEEFGDRYAKADEKESYEFYREYGLKYELAKLQKDLESFRVKFDVWFSETSLYKNGKIDQALAVLKERDEIFEEDGATWFRSMTYGDDKNRVLIKNDGSYTYLTPDIAYHRDKLERGFDKLINIWGADHHGYIPRMKAAIQALGYDKETLEVEIIQMVQLYQNGEKMKMSKRTGKAVTLRELMEEVGVDAMRYFFAMRSGDSHLDFDMDLAVSKSNENPVYYAQYAHARVCSILRQGEELGLATGGDVNYKLVTSEKEVELLKKLGEFPAVVADAAQKRLPHRITNYAFELAATLHSFYNAEKVLNQDNLELSKARYELMKAVRTTLQNALAIVGVSAPEKM.

Positions 132 to 142 match the 'HIGH' region motif; it reads ANPTGDLHLGH.

This sequence belongs to the class-I aminoacyl-tRNA synthetase family. In terms of assembly, monomer.

It is found in the cytoplasm. It catalyses the reaction tRNA(Arg) + L-arginine + ATP = L-arginyl-tRNA(Arg) + AMP + diphosphate. The sequence is that of Arginine--tRNA ligase 2 from Bacillus thuringiensis subsp. konkukian (strain 97-27).